The chain runs to 40 residues: Dolichyl-diphosphooligosaccharide--protein glycosyltransferase subunit 4 (40 aa).

Residues 1–4 (MITD) lie on the Lumenal side of the membrane. The helical transmembrane segment at 5 to 25 (VQLAIFSNVLGVFLFLLVVAY) threads the bilayer. Residues 26-40 (HYINANTGKSSIKNK) are Cytoplasmic-facing.

This sequence belongs to the OST4 family. Component of the oligosaccharyltransferase (OST) complex.

It localises to the endoplasmic reticulum membrane. Its function is as follows. Subunit of the oligosaccharyl transferase (OST) complex that catalyzes the initial transfer of a defined glycan (Glc(3)Man(9)GlcNAc(2) in eukaryotes) from the lipid carrier dolichol-pyrophosphate to an asparagine residue within an Asn-X-Ser/Thr consensus motif in nascent polypeptide chains, the first step in protein N-glycosylation. N-glycosylation occurs cotranslationally and the complex associates with the Sec61 complex at the channel-forming translocon complex that mediates protein translocation across the endoplasmic reticulum (ER). All subunits are required for a maximal enzyme activity. The polypeptide is Dolichyl-diphosphooligosaccharide--protein glycosyltransferase subunit 4 (Drosophila mojavensis (Fruit fly)).